We begin with the raw amino-acid sequence, 513 residues long: 2-isopropylmalate synthase (513 aa).

The Pyruvate carboxyltransferase domain occupies 4 to 266 (IEFFDTSLRD…QSPLKLSETA (263 aa)). Mn(2+)-binding residues include Asp13, His201, His203, and Asn237. The interval 390 to 513 (ILDNVQIDGH…VEQISAHDGI (124 aa)) is regulatory domain.

Belongs to the alpha-IPM synthase/homocitrate synthase family. LeuA type 1 subfamily. In terms of assembly, homodimer. Mn(2+) serves as cofactor.

The protein resides in the cytoplasm. The catalysed reaction is 3-methyl-2-oxobutanoate + acetyl-CoA + H2O = (2S)-2-isopropylmalate + CoA + H(+). It participates in amino-acid biosynthesis; L-leucine biosynthesis; L-leucine from 3-methyl-2-oxobutanoate: step 1/4. Functionally, catalyzes the condensation of the acetyl group of acetyl-CoA with 3-methyl-2-oxobutanoate (2-ketoisovalerate) to form 3-carboxy-3-hydroxy-4-methylpentanoate (2-isopropylmalate). In Lactococcus lactis subsp. lactis (strain IL1403) (Streptococcus lactis), this protein is 2-isopropylmalate synthase.